A 130-amino-acid chain; its full sequence is Small ribosomal subunit protein uS9 (130 aa).

Residues 105-130 (TRDPRMKERKKYGLKKARRAPQFSKR) form a disordered region. Over residues 111-130 (KERKKYGLKKARRAPQFSKR) the composition is skewed to basic residues.

Belongs to the universal ribosomal protein uS9 family.

The protein is Small ribosomal subunit protein uS9 of Acetivibrio thermocellus (strain ATCC 27405 / DSM 1237 / JCM 9322 / NBRC 103400 / NCIMB 10682 / NRRL B-4536 / VPI 7372) (Clostridium thermocellum).